We begin with the raw amino-acid sequence, 247 residues long: RNA polymerase sigma factor FliA (247 aa).

The tract at residues leucine 22–tryptophan 94 is sigma-70 factor domain-2. The Interaction with polymerase core subunit RpoC motif lies at aspartate 49–glutamine 52. The segment at asparagine 102 to histidine 171 is sigma-70 factor domain-3. The sigma-70 factor domain-4 stretch occupies residues alanine 190–arginine 238. Positions leucine 212–serine 231 form a DNA-binding region, H-T-H motif.

This sequence belongs to the sigma-70 factor family. FliA subfamily.

Its subcellular location is the cytoplasm. In terms of biological role, sigma factors are initiation factors that promote the attachment of RNA polymerase to specific initiation sites and are then released. This sigma factor controls the expression of flagella-related genes. Required for the flagellin gene (fliC) expression. This chain is RNA polymerase sigma factor FliA, found in Pseudomonas aeruginosa (strain ATCC 15692 / DSM 22644 / CIP 104116 / JCM 14847 / LMG 12228 / 1C / PRS 101 / PAO1).